Reading from the N-terminus, the 598-residue chain is Elongation factor 4 (598 aa).

A tr-type G domain is found at 3–185 (QHIRNFSIIA…MIVAQIPPPE (183 aa)). GTP contacts are provided by residues 15 to 20 (DHGKST) and 132 to 135 (NKID).

It belongs to the TRAFAC class translation factor GTPase superfamily. Classic translation factor GTPase family. LepA subfamily.

The protein resides in the cell inner membrane. The catalysed reaction is GTP + H2O = GDP + phosphate + H(+). Functionally, required for accurate and efficient protein synthesis under certain stress conditions. May act as a fidelity factor of the translation reaction, by catalyzing a one-codon backward translocation of tRNAs on improperly translocated ribosomes. Back-translocation proceeds from a post-translocation (POST) complex to a pre-translocation (PRE) complex, thus giving elongation factor G a second chance to translocate the tRNAs correctly. Binds to ribosomes in a GTP-dependent manner. The polypeptide is Elongation factor 4 (Nitrosomonas europaea (strain ATCC 19718 / CIP 103999 / KCTC 2705 / NBRC 14298)).